The sequence spans 390 residues: Telobox protein 1 (390 aa).

The tract at residues 30-57 (ENPSKREVAQDVPGFERKPTKVRKPRVK) is disordered. The segment covering 32-48 (PSKREVAQDVPGFERKP) has biased composition (basic and acidic residues). 2 HTH myb-type domains span residues 50–109 (KVRK…PEDY) and 135–193 (STRK…PERY). Positions 78 to 105 (WKKILLDERFHFTNRSPNDLKDRFRTIL) form a DNA-binding region, H-T-H motif. The interval 115-143 (NAKTHMGRPQKIPHTVGLSKSTRKERKQF) is disordered. Residues 162–189 (WTRISKDANLGLQNRRSTDLRDRFRNAF) constitute a DNA-binding region (H-T-H motif). Composition is skewed to polar residues over residues 244 to 257 (SNPN…TEQP) and 322 to 340 (ISPS…SIQQ). Disordered stretches follow at residues 244-278 (SNPN…FTSQ) and 316-390 (QPPS…DNRG). Residues 347-360 (PPLSSNTLNSSTLP) are compositionally biased toward low complexity.

It is found in the nucleus. Functionally, general transcription factor with prominent roles in controlling histone levels and stability. Binds and regulates the activities of many promoters, including those controlling the expression of all four types of canonical histones. Is also involved in the centromeric loading of cnp1 and maintenance of centromere identity. Moreover, regulates the expression of cdc2, a protease capable of histone clipping. The chain is Telobox protein 1 from Schizosaccharomyces pombe (strain 972 / ATCC 24843) (Fission yeast).